The following is a 161-amino-acid chain: Large ribosomal subunit protein uL10 (161 aa).

Belongs to the universal ribosomal protein uL10 family. Part of the ribosomal stalk of the 50S ribosomal subunit. The N-terminus interacts with L11 and the large rRNA to form the base of the stalk. The C-terminus forms an elongated spine to which L12 dimers bind in a sequential fashion forming a multimeric L10(L12)X complex.

Forms part of the ribosomal stalk, playing a central role in the interaction of the ribosome with GTP-bound translation factors. The chain is Large ribosomal subunit protein uL10 from Sulfurovum sp. (strain NBC37-1).